The sequence spans 927 residues: Protein LONGIFOLIA 1 (927 aa).

Disordered stretches follow at residues 41–198 (TGDE…EGRR), 210–257 (YDER…GHRR), 460–588 (AQKV…SDSN), and 605–626 (YERN…DLGM). Residues 86-114 (SSESSSRLSFSSSPCSSSFSSADISTTAS) are compositionally biased toward low complexity. Over residues 115 to 125 (QFEQPGLSNGE) the composition is skewed to polar residues. The segment covering 146–165 (DIRELVRSSIHKETRTRDEE) has biased composition (basic and acidic residues). Positions 182–193 (KESSPSRNSNEW) are enriched in polar residues. A compositionally biased stretch (basic and acidic residues) spans 210-226 (YDERETRKTGAKLKETP). A compositionally biased stretch (low complexity) spans 232-245 (SRSNSFRSARSSCS). Polar residues-rich tracts occupy residues 483-500 (QTES…QSKS) and 538-553 (NKNQ…TESA). Basic and acidic residues-rich tracts occupy residues 569-584 (SEDR…RSLR) and 605-616 (YERNSDITEQHT).

As to quaternary structure, interacts (via C-terminus) with TON1A and TON1B. In terms of tissue distribution, expressed in roots, petioles, leaf blades and floral organs.

It is found in the nucleus. In terms of biological role, in association with LNG2, regulates leaf morphology by promoting longitudinal polar cell elongation independently of ROT3. The polypeptide is Protein LONGIFOLIA 1 (LNG1) (Arabidopsis thaliana (Mouse-ear cress)).